The sequence spans 404 residues: Tryptophan synthase beta chain (404 aa).

At K98 the chain carries N6-(pyridoxal phosphate)lysine.

It belongs to the TrpB family. Tetramer of two alpha and two beta chains. Requires pyridoxal 5'-phosphate as cofactor.

The catalysed reaction is (1S,2R)-1-C-(indol-3-yl)glycerol 3-phosphate + L-serine = D-glyceraldehyde 3-phosphate + L-tryptophan + H2O. It participates in amino-acid biosynthesis; L-tryptophan biosynthesis; L-tryptophan from chorismate: step 5/5. Its function is as follows. The beta subunit is responsible for the synthesis of L-tryptophan from indole and L-serine. This Rhodopseudomonas palustris (strain ATCC BAA-98 / CGA009) protein is Tryptophan synthase beta chain.